The chain runs to 317 residues: Acetylglutamate kinase (317 aa).

Substrate is bound by residues 75–76, arginine 97, and asparagine 196; that span reads GG.

Belongs to the acetylglutamate kinase family. ArgB subfamily.

The protein localises to the cytoplasm. It catalyses the reaction N-acetyl-L-glutamate + ATP = N-acetyl-L-glutamyl 5-phosphate + ADP. It functions in the pathway amino-acid biosynthesis; L-arginine biosynthesis; N(2)-acetyl-L-ornithine from L-glutamate: step 2/4. Functionally, catalyzes the ATP-dependent phosphorylation of N-acetyl-L-glutamate. The polypeptide is Acetylglutamate kinase (Corynebacterium jeikeium (strain K411)).